Here is a 49-residue protein sequence, read N- to C-terminus: Large ribosomal subunit protein bL33A (49 aa).

This sequence belongs to the bacterial ribosomal protein bL33 family.

The protein is Large ribosomal subunit protein bL33A of Levilactobacillus brevis (strain ATCC 367 / BCRC 12310 / CIP 105137 / JCM 1170 / LMG 11437 / NCIMB 947 / NCTC 947) (Lactobacillus brevis).